Consider the following 418-residue polypeptide: Probable cysteine desulfurase 2 (418 aa).

Lysine 234 bears the N6-(pyridoxal phosphate)lysine mark. The active-site Cysteine persulfide intermediate is the cysteine 374.

It belongs to the class-V pyridoxal-phosphate-dependent aminotransferase family. Csd subfamily. Pyridoxal 5'-phosphate serves as cofactor.

It carries out the reaction (sulfur carrier)-H + L-cysteine = (sulfur carrier)-SH + L-alanine. Catalyzes the removal of elemental sulfur and selenium atoms from L-cysteine, L-cystine, L-selenocysteine, and L-selenocystine to produce L-alanine. This chain is Probable cysteine desulfurase 2 (csd2), found in Mycobacterium leprae (strain TN).